A 366-amino-acid chain; its full sequence is NADH-quinone oxidoreductase subunit D (366 aa).

It belongs to the complex I 49 kDa subunit family. As to quaternary structure, NDH-1 is composed of 14 different subunits. Subunits NuoB, C, D, E, F, and G constitute the peripheral sector of the complex.

It is found in the cell membrane. It catalyses the reaction a quinone + NADH + 5 H(+)(in) = a quinol + NAD(+) + 4 H(+)(out). NDH-1 shuttles electrons from NADH, via FMN and iron-sulfur (Fe-S) centers, to quinones in the respiratory chain. The immediate electron acceptor for the enzyme in this species is believed to be a menaquinone. Couples the redox reaction to proton translocation (for every two electrons transferred, four hydrogen ions are translocated across the cytoplasmic membrane), and thus conserves the redox energy in a proton gradient. This is NADH-quinone oxidoreductase subunit D from Bacillus mycoides (strain KBAB4) (Bacillus weihenstephanensis).